The chain runs to 159 residues: Type IV major alpha-pilin (159 aa).

Residues 1-6 (MNAQKG) constitute a propeptide, leader sequence. Position 7 is an N-methylphenylalanine (phenylalanine 7). The chain crosses the membrane as a helical span at residues 7-27 (FTLIELMIVIAIIGILAAIAL). The disordered stretch occupies residues 64-87 (VLSEESSTSKENIGLTSSETSTKP). Polar residues predominate over residues 67–87 (EESSTSKENIGLTSSETSTKP). Residues cysteine 137 and cysteine 156 are joined by a disulfide bond.

Belongs to the N-Me-Phe pilin family. Major component of the type IV pilus (T4P) that plays a role in surface and attachment to the host epithelial tissues.

It localises to the fimbrium. The protein localises to the membrane. The protein is Type IV major alpha-pilin (tfpI) of Moraxella bovis.